Here is a 1130-residue protein sequence, read N- to C-terminus: ABC transporter ATM1 (1130 aa).

Residues 1 to 65 (MQPPTRAPFF…ESFHSSAFQL (65 aa)) constitute a mitochondrion transit peptide. 3 disordered regions span residues 191 to 212 (DAWT…CVRP), 276 to 315 (HHAP…RNMS), and 341 to 385 (STFS…TSSP). 2 stretches are compositionally biased toward polar residues: residues 195–206 (SGCSGQTDNATA) and 305–315 (GSLTLSPRNMS). The helical transmembrane segment at 406 to 426 (PNPTSLQLLFSLFPFLWPTAL) threads the bilayer. Over residues 468-502 (PLSPSGASPSSGDTSLLASSGETSSSLSPSAAPAE) the composition is skewed to low complexity. The tract at residues 468 to 554 (PLSPSGASPS…AGKAGTSVGG (87 aa)) is disordered. The span at 503 to 523 (GAREAGKSGESAGRERRDEGS) shows a compositional bias: basic and acidic residues. The next 5 helical transmembrane spans lie at 574–594 (IVSV…AATG), 653–673 (VLLF…YLLG), 678–698 (GPVA…TAAV), 761–781 (LAFL…GSLA), and 791–811 (LLPV…AVPL). Residues 587–823 (VARIAATGFN…VGTIYRETSL (237 aa)) enclose the ABC transmembrane type-1 domain. The region spanning 857 to 1111 (VAFENVRFAY…ERGLYRALWE (255 aa)) is the ABC transporter domain. An ATP-binding site is contributed by 910–917 (GPSGVGKS).

Belongs to the ABC transporter superfamily. ABCB family. Heavy Metal importer (TC 3.A.1.210) subfamily. Homodimer.

The protein localises to the mitochondrion membrane. Probably transports iron-sulfur clusters in an ATP-dependent manner. Plays a role in [Fe-S] proteins homeostasis. Required for optimal parasite growth and lytic cycle. The polypeptide is ABC transporter ATM1 (Toxoplasma gondii (strain ATCC 50611 / Me49)).